The following is a 367-amino-acid chain: Glutamate 5-kinase (367 aa).

An ATP-binding site is contributed by lysine 8. Residues serine 49, aspartate 136, and asparagine 148 each contribute to the substrate site. Residues 168–169 (TD) and 210–216 (TGGMVTK) each bind ATP. A PUA domain is found at 275–353 (AGKLYLDEGA…REISTILGYA (79 aa)).

The protein belongs to the glutamate 5-kinase family.

The protein localises to the cytoplasm. The catalysed reaction is L-glutamate + ATP = L-glutamyl 5-phosphate + ADP. It functions in the pathway amino-acid biosynthesis; L-proline biosynthesis; L-glutamate 5-semialdehyde from L-glutamate: step 1/2. Functionally, catalyzes the transfer of a phosphate group to glutamate to form L-glutamate 5-phosphate. The protein is Glutamate 5-kinase of Nostoc punctiforme (strain ATCC 29133 / PCC 73102).